The primary structure comprises 182 residues: CKLF-like MARVEL transmembrane domain-containing protein 3 (182 aa).

Residues Met-1–Pro-12 show a composition bias toward acidic residues. Residues Met-1–Gly-21 are disordered. An MARVEL domain is found at Phe-36 to Ala-155. 3 helical membrane passes run Ala-64–Ala-84, Met-101–Ile-121, and Ala-131–Phe-151.

Belongs to the chemokine-like factor family. In terms of tissue distribution, expressed in the leukocytes, placenta and testis.

It is found in the membrane. In Homo sapiens (Human), this protein is CKLF-like MARVEL transmembrane domain-containing protein 3 (CMTM3).